The chain runs to 437 residues: Adenylosuccinate synthetase (437 aa).

GTP is bound by residues 12–18 (GDEGKGK) and 40–42 (GHT). Aspartate 13 serves as the catalytic Proton acceptor. Positions 13 and 40 each coordinate Mg(2+). IMP-binding positions include 13–16 (DEGK), 38–41 (NAGH), threonine 128, arginine 142, glutamine 223, threonine 238, and arginine 302. The active-site Proton donor is the histidine 41. Substrate is bound at residue 298–304 (TTTGRRR). Residues arginine 304, 330 to 332 (KLD), and 412 to 414 (SLG) each bind GTP.

This sequence belongs to the adenylosuccinate synthetase family. In terms of assembly, homodimer. Requires Mg(2+) as cofactor.

It localises to the cytoplasm. It catalyses the reaction IMP + L-aspartate + GTP = N(6)-(1,2-dicarboxyethyl)-AMP + GDP + phosphate + 2 H(+). It participates in purine metabolism; AMP biosynthesis via de novo pathway; AMP from IMP: step 1/2. Plays an important role in the de novo pathway of purine nucleotide biosynthesis. Catalyzes the first committed step in the biosynthesis of AMP from IMP. In Parasynechococcus marenigrum (strain WH8102), this protein is Adenylosuccinate synthetase.